The primary structure comprises 78 residues: Translation initiation factor IF-1, chloroplastic (78 aa).

Positions 1–72 (MEKQKLIDME…TKGRITYRLR (72 aa)) constitute an S1-like domain.

This sequence belongs to the IF-1 family. In terms of assembly, component of the 30S ribosomal translation pre-initiation complex which assembles on the 30S ribosome in the order IF-2 and IF-3, IF-1 and N-formylmethionyl-tRNA(fMet); mRNA recruitment can occur at any time during PIC assembly.

Its subcellular location is the plastid. The protein resides in the chloroplast. Functionally, one of the essential components for the initiation of protein synthesis. Stabilizes the binding of IF-2 and IF-3 on the 30S subunit to which N-formylmethionyl-tRNA(fMet) subsequently binds. Helps modulate mRNA selection, yielding the 30S pre-initiation complex (PIC). Upon addition of the 50S ribosomal subunit IF-1, IF-2 and IF-3 are released leaving the mature 70S translation initiation complex. This is Translation initiation factor IF-1, chloroplastic from Marchantia polymorpha (Common liverwort).